Here is a 129-residue protein sequence, read N- to C-terminus: MEEGEAKKTGLEGTGLSLPGSSHGNLRSAGSDQQLKQMLDSLKSSKSPAVINYGASWCRVCSQILPPFCRFSNEFKNLTFIYADIDECPETTQNIRYTPTFHFYRDGEKVDEMLGTGEERLHDRLWLHS.

Residues 1–10 are compositionally biased toward basic and acidic residues; that stretch reads MEEGEAKKTG. The tract at residues 1 to 30 is disordered; the sequence is MEEGEAKKTGLEGTGLSLPGSSHGNLRSAG. The Thioredoxin domain occupies 7–129; it reads KKTGLEGTGL…RLHDRLWLHS (123 aa). The span at 19 to 30 shows a compositional bias: polar residues; sequence PGSSHGNLRSAG. Active-site nucleophile residues include Cys58 and Cys61. The cysteines at positions 58 and 61 are disulfide-linked.

The protein belongs to the thioredoxin family.

In terms of biological role, probable thiol-disulfide oxidoreductase that may participate in various redox reactions. The polypeptide is Thioredoxin-like 3-3 (Oryza sativa subsp. japonica (Rice)).